We begin with the raw amino-acid sequence, 1521 residues long: uncharacterized protein (1521 aa).

Disordered regions lie at residues 1-20 (MENN…NSNN), 85-124 (TFQS…NNNN), 218-254 (ASSP…SSSS), 431-482 (VLNS…TGIT), and 735-797 (NNNN…HQQQ). Composition is skewed to low complexity over residues 94 to 108 (NTSS…QNNP), 219 to 254 (SSPS…SSSS), and 431 to 454 (VLNS…NNTS). Over residues 455-464 (PAIVTSASIH) the composition is skewed to polar residues. 2 stretches are compositionally biased toward low complexity: residues 465–482 (NSNG…TGIT) and 735–762 (NNNN…NNIL). A compositionally biased stretch (polar residues) spans 763–774 (SNTLTSSLINEP). The span at 775 to 788 (NQQHQHQQHQQQNQ) shows a compositional bias: low complexity. Residues 853–903 (IVNSQQQQQQQQQQQQQQQQQQQQQQQQQQQQQQQQQQQQQQHNNTQNINN) are a coiled coil. A compositionally biased stretch (low complexity) spans 1398-1453 (QQPLPTSKTSSSSSSTSSEATPYLSSSVPPSIVTSTPSTTPMISSSNPNTSSLPTS). The interval 1398 to 1455 (QQPLPTSKTSSSSSSTSSEATPYLSSSVPPSIVTSTPSTTPMISSSNPNTSSLPTSER) is disordered.

This is an uncharacterized protein from Dictyostelium discoideum (Social amoeba).